The following is a 1380-amino-acid chain: DNA-directed RNA polymerase subunit beta (1380 aa).

The protein belongs to the RNA polymerase beta chain family. In terms of assembly, the RNAP catalytic core consists of 2 alpha, 1 beta, 1 beta' and 1 omega subunit. When a sigma factor is associated with the core the holoenzyme is formed, which can initiate transcription.

It catalyses the reaction RNA(n) + a ribonucleoside 5'-triphosphate = RNA(n+1) + diphosphate. DNA-dependent RNA polymerase catalyzes the transcription of DNA into RNA using the four ribonucleoside triphosphates as substrates. This Ehrlichia ruminantium (strain Welgevonden) protein is DNA-directed RNA polymerase subunit beta.